The chain runs to 92 residues: Integration host factor subunit beta (92 aa).

It belongs to the bacterial histone-like protein family. As to quaternary structure, heterodimer of an alpha and a beta chain.

In terms of biological role, this protein is one of the two subunits of integration host factor, a specific DNA-binding protein that functions in genetic recombination as well as in transcriptional and translational control. The protein is Integration host factor subunit beta of Azotobacter vinelandii (strain DJ / ATCC BAA-1303).